A 287-amino-acid chain; its full sequence is SPX domain-containing protein 2 (287 aa).

Residues 1 to 162 (MKFGKSLSNQ…GALIRLPFIQ (162 aa)) form the SPX domain. Basic and acidic residues predominate over residues 36 to 50 (EPRSVENRPNKRSRS). 2 disordered regions span residues 36–61 (EPRS…DPTV) and 194–213 (KSRN…VKTG).

It is found in the nucleus. May inhibit PHR1 DNA-binding activity in a Pi-dependent manner. The sequence is that of SPX domain-containing protein 2 from Arabidopsis thaliana (Mouse-ear cress).